We begin with the raw amino-acid sequence, 418 residues long: Serine proteinase inhibitor 2.4 (418 aa).

Residues 1 to 28 (MAFIAALGIFMAGICPAVLCFPNGTLGR) form the signal peptide. N-linked (GlcNAc...) asparagine glycosylation is found at Asn23, Asn38, Asn104, and Asn269.

Belongs to the serpin family.

It localises to the secreted. In Apodemus sylvaticus (European woodmouse), this protein is Serine proteinase inhibitor 2.4.